The chain runs to 424 residues: Histidine--tRNA ligase (424 aa).

This sequence belongs to the class-II aminoacyl-tRNA synthetase family. In terms of assembly, homodimer.

It localises to the cytoplasm. The enzyme catalyses tRNA(His) + L-histidine + ATP = L-histidyl-tRNA(His) + AMP + diphosphate + H(+). In Shigella boydii serotype 18 (strain CDC 3083-94 / BS512), this protein is Histidine--tRNA ligase.